Consider the following 330-residue polypeptide: Putative protein N-methyltransferase FAM86B1 (330 aa).

S-adenosyl-L-methionine contacts are provided by residues Trp139, 165-167 (GSG), Trp228, and Ala247.

It belongs to the class I-like SAM-binding methyltransferase superfamily. EEF2KMT family.

The sequence is that of Putative protein N-methyltransferase FAM86B1 from Homo sapiens (Human).